A 244-amino-acid chain; its full sequence is Osmotin-like protein OSM34 (244 aa).

Residues 1-22 form the signal peptide; that stretch reads MANLLVSTFIFSALLLISTATA. 8 disulfides stabilise this stretch: C31–C222, C72–C82, C87–C93, C138–C212, C143–C195, C151–C161, C165–C174, and C175–C182.

The protein belongs to the thaumatin family.

This chain is Osmotin-like protein OSM34 (OSM34), found in Arabidopsis thaliana (Mouse-ear cress).